The primary structure comprises 423 residues: Histidine--tRNA ligase (423 aa).

Belongs to the class-II aminoacyl-tRNA synthetase family. In terms of assembly, homodimer.

It is found in the cytoplasm. It carries out the reaction tRNA(His) + L-histidine + ATP = L-histidyl-tRNA(His) + AMP + diphosphate + H(+). The polypeptide is Histidine--tRNA ligase (Haemophilus ducreyi (strain 35000HP / ATCC 700724)).